A 627-amino-acid chain; its full sequence is BEL1-like homeodomain protein 4 (627 aa).

The segment at 206-225 (SSQHHHHQVVGHFGSSSSSP) is disordered. Over residues 215-225 (VGHFGSSSSSP) the composition is skewed to low complexity. The tract at residues 241 to 257 (SKYTKPAQELLEEFCSV) is SR/KY domain. The interval 263-307 (KKNKLSRNNSNPNTTGGGGGGGSSSSAGTANDSPPLSPADRIEHQ) is disordered. The interval 302-373 (DRIEHQRRKV…CLKDAVAVQL (72 aa)) is BELL domain. Residues 424–486 (AWRPQRGLPE…NARVRLWKPM (63 aa)) constitute a DNA-binding region (homeobox). The segment at 494–530 (EAKEREEAEEENENQQQQRRQQQTNNNDTKPNNNENN) is disordered. Residues 507 to 530 (NQQQQRRQQQTNNNDTKPNNNENN) show a composition bias toward low complexity.

The protein belongs to the TALE/BELL homeobox family. May form heterodimeric complexes with TALE/KNOX proteins. Interacts with OFP1, OFP2 and OFP5. Interacts with KNATM, isoform KNATM-B. In terms of tissue distribution, expressed in lateral organs.

The protein resides in the nucleus. Its function is as follows. Transcription factor that establishes leaf shape by repressing growth in specific subdomains of the leaf. Negatively regulates knox homeobox gene KNAT1/BP expression. The sequence is that of BEL1-like homeodomain protein 4 (BLH4) from Arabidopsis thaliana (Mouse-ear cress).